We begin with the raw amino-acid sequence, 318 residues long: Homoserine kinase (318 aa).

97–107 (PIGSGLGSSAC) contributes to the ATP binding site.

This sequence belongs to the GHMP kinase family. Homoserine kinase subfamily.

Its subcellular location is the cytoplasm. It catalyses the reaction L-homoserine + ATP = O-phospho-L-homoserine + ADP + H(+). Its pathway is amino-acid biosynthesis; L-threonine biosynthesis; L-threonine from L-aspartate: step 4/5. Catalyzes the ATP-dependent phosphorylation of L-homoserine to L-homoserine phosphate. The polypeptide is Homoserine kinase (Vibrio parahaemolyticus serotype O3:K6 (strain RIMD 2210633)).